Consider the following 810-residue polypeptide: Glycerol-3-phosphate acyltransferase (810 aa).

Positions 305-310 match the HXXXXD motif motif; that stretch reads CHRSHI.

It belongs to the GPAT/DAPAT family.

The protein resides in the cell inner membrane. It catalyses the reaction sn-glycerol 3-phosphate + an acyl-CoA = a 1-acyl-sn-glycero-3-phosphate + CoA. Its pathway is phospholipid metabolism; CDP-diacylglycerol biosynthesis; CDP-diacylglycerol from sn-glycerol 3-phosphate: step 1/3. The chain is Glycerol-3-phosphate acyltransferase from Haemophilus influenzae (strain 86-028NP).